A 141-amino-acid chain; its full sequence is Hemoglobin subunit alpha (141 aa).

Residues 1-141 (VLSATDKANV…VATVLTSKYR (141 aa)) enclose the Globin domain. Ser-3 is subject to Phosphoserine. Residues Lys-7 and Lys-11 each carry the N6-succinyllysine modification. Position 16 is an N6-acetyllysine; alternate (Lys-16). Residue Lys-16 is modified to N6-succinyllysine; alternate. Position 24 is a phosphotyrosine (Tyr-24). Lys-40 carries the N6-succinyllysine modification. Residue His-58 coordinates O2. Residue His-87 participates in heme b binding. Ser-102 bears the Phosphoserine mark. Thr-108 carries the phosphothreonine modification. Ser-124 is modified (phosphoserine). 2 positions are modified to phosphothreonine: Thr-134 and Thr-137. Ser-138 carries the post-translational modification Phosphoserine.

The protein belongs to the globin family. In terms of assembly, heterotetramer of two alpha chains and two beta chains. Red blood cells.

Involved in oxygen transport from the lung to the various peripheral tissues. Its function is as follows. Hemopressin acts as an antagonist peptide of the cannabinoid receptor CNR1. Hemopressin-binding efficiently blocks cannabinoid receptor CNR1 and subsequent signaling. In Erinaceus europaeus (Western European hedgehog), this protein is Hemoglobin subunit alpha (HBA).